The following is a 348-amino-acid chain: Rhodopsin (348 aa).

An N-acetylmethionine modification is found at methionine 1. Residues 1–36 (MNGTEGPNFYVPFSNATGVVRSPFEYPQYYLAEPWQ) are Extracellular-facing. Asparagine 2 and asparagine 15 each carry an N-linked (GlcNAc...) asparagine glycan. A helical transmembrane segment spans residues 37–61 (FSMLAAYMFLLIVLGFPINFLTLYV). Residues 62-73 (TVQHKKLRTPLN) are Cytoplasmic-facing. Residues 74–96 (YILLNLAVADLFMVFGGFTTTLY) traverse the membrane as a helical segment. The Extracellular portion of the chain corresponds to 97–110 (TSLHGYFVFGPTGC). Residues cysteine 110 and cysteine 187 are joined by a disulfide bond. A helical membrane pass occupies residues 111-133 (NAEGFFATLGGEIALWSLVVLAI). The short motif at 134-136 (ERY) is the 'Ionic lock' involved in activated form stabilization element. At 134–152 (ERYVVVCKPMSNFRFGENH) the chain is on the cytoplasmic side. The helical transmembrane segment at 153–173 (AIMGVAFTWVMALACAAPPLF) threads the bilayer. The Extracellular portion of the chain corresponds to 174-202 (GWSRYIPEGLQCSCGIDYYTLKPEVNNES). Glutamate 201 is a Zn(2+) binding site. The chain crosses the membrane as a helical span at residues 203–224 (FVIYMFVVHFTIPMIVIFFCYG). Residues 225-252 (QLVFTVKEARAQQQESATTQKAEKEVTR) lie on the Cytoplasmic side of the membrane. The helical transmembrane segment at 253–274 (MVIIMVIAFLICWVPYASVAFY) threads the bilayer. At 275–286 (IFTHQGSNFGPI) the chain is on the extracellular side. Glutamine 279 is a binding site for Zn(2+). A helical transmembrane segment spans residues 287-308 (FMTIPAFFAKSASIYNPVIYIM). Lysine 296 bears the N6-(retinylidene)lysine mark. At 309-348 (MNKQFRNCMLTTICCGKNPLGDDEASATVSKTETSQVAPA) the chain is on the cytoplasmic side. 2 S-palmitoyl cysteine lipidation sites follow: cysteine 322 and cysteine 323. Positions 330-348 (DDEASATVSKTETSQVAPA) are interaction with SAG. Serine 334 carries the post-translational modification Phosphoserine. Threonine 336 carries the post-translational modification Phosphothreonine. Serine 338 bears the Phosphoserine mark. Phosphothreonine is present on residues threonine 340 and threonine 342. Serine 343 carries the phosphoserine modification.

Belongs to the G-protein coupled receptor 1 family. Opsin subfamily. As to quaternary structure, homodimer. May form a complex composed of RHO, GRK1 and RCVRN in a Ca(2+)-dependent manner; RCVRN prevents the interaction between GRK1 and RHO. Interacts with GRK1. Interacts (phosphorylated form) with SAG. Interacts with GNAT1. Interacts with GNAT3. SAG and G-proteins compete for a common binding site. Interacts with PRCD; the interaction promotes PRCD stability. Forms a complex with ASAP1 and ARF4. Forms a complex with ASAP1, RAB11A, Rabin8/RAB3IP, ARF4 and RAB11FIP3; the complex regulates Golgi-to-cilia rhodopsin/RHO transport in photoreceptors. Phosphorylated on some or all of the serine and threonine residues present in the C-terminal region. Post-translationally, contains one covalently linked retinal chromophore. Upon light absorption, the covalently bound 11-cis-retinal is converted to all-trans-retinal. After hydrolysis of the Schiff base and release of the covalently bound all-trans-retinal, active rhodopsin is regenerated by binding of a fresh molecule of 11-cis-retinal.

The protein localises to the membrane. Its subcellular location is the cell projection. It is found in the cilium. The protein resides in the photoreceptor outer segment. Functionally, photoreceptor required for image-forming vision at low light intensity. Required for photoreceptor cell viability after birth. Light-induced isomerization of 11-cis to all-trans retinal triggers a conformational change that activates signaling via G-proteins. Subsequent receptor phosphorylation mediates displacement of the bound G-protein alpha subunit by the arrestin SAG and terminates signaling. The chain is Rhodopsin (RHO) from Macaca fascicularis (Crab-eating macaque).